The sequence spans 197 residues: Xanthine phosphoribosyltransferase (197 aa).

Xanthine-binding residues include Leu-20 and Asn-27. Residue 128 to 132 (ANGQA) participates in 5-phospho-alpha-D-ribose 1-diphosphate binding. Residue Lys-156 participates in xanthine binding.

It belongs to the purine/pyrimidine phosphoribosyltransferase family. Xpt subfamily. In terms of assembly, homodimer.

The protein localises to the cytoplasm. It carries out the reaction XMP + diphosphate = xanthine + 5-phospho-alpha-D-ribose 1-diphosphate. Its pathway is purine metabolism; XMP biosynthesis via salvage pathway; XMP from xanthine: step 1/1. In terms of biological role, converts the preformed base xanthine, a product of nucleic acid breakdown, to xanthosine 5'-monophosphate (XMP), so it can be reused for RNA or DNA synthesis. The sequence is that of Xanthine phosphoribosyltransferase from Bacillus mycoides (strain KBAB4) (Bacillus weihenstephanensis).